Here is a 237-residue protein sequence, read N- to C-terminus: Probable transcriptional regulatory protein EAT1b_0153 (237 aa).

This sequence belongs to the TACO1 family. YeeN subfamily.

The protein localises to the cytoplasm. In Exiguobacterium sp. (strain ATCC BAA-1283 / AT1b), this protein is Probable transcriptional regulatory protein EAT1b_0153.